We begin with the raw amino-acid sequence, 160 residues long: SsrA-binding protein (160 aa).

Residues 131-160 (KKEFDKRHTEKERDSDREIQRAMRTKGKDD) form a disordered region.

This sequence belongs to the SmpB family.

It is found in the cytoplasm. In terms of biological role, required for rescue of stalled ribosomes mediated by trans-translation. Binds to transfer-messenger RNA (tmRNA), required for stable association of tmRNA with ribosomes. tmRNA and SmpB together mimic tRNA shape, replacing the anticodon stem-loop with SmpB. tmRNA is encoded by the ssrA gene; the 2 termini fold to resemble tRNA(Ala) and it encodes a 'tag peptide', a short internal open reading frame. During trans-translation Ala-aminoacylated tmRNA acts like a tRNA, entering the A-site of stalled ribosomes, displacing the stalled mRNA. The ribosome then switches to translate the ORF on the tmRNA; the nascent peptide is terminated with the 'tag peptide' encoded by the tmRNA and targeted for degradation. The ribosome is freed to recommence translation, which seems to be the essential function of trans-translation. This Stutzerimonas stutzeri (strain A1501) (Pseudomonas stutzeri) protein is SsrA-binding protein.